A 313-amino-acid chain; its full sequence is PDCD10 and GCKIII kinases-associated protein 1 (313 aa).

Residues 40–89 (RLKGTQNSEVEVPRNALHDGSLSNSESRGSTTGLPHQGPLPQEDSEERPC) are disordered. A phosphoserine mark is found at Ser60 and Ser64. The segment covering 60–73 (SLSNSESRGSTTGL) has biased composition (polar residues). Residue Thr104 is modified to Phosphothreonine. 3 positions are modified to phosphoserine: Ser107, Ser237, and Ser240. Positions 253-286 (YFKEEGPTHPTPAADSGSEREDPHTYNGDREGVV) are disordered. The segment covering 269–285 (GSEREDPHTYNGDREGV) has biased composition (basic and acidic residues).

In terms of assembly, interacts with KEAP1; this interaction prevents the ubiquitination of KEAP1 by TRIM25, thus protecting KEAP1 from degradation. Found in association with PDCD10 and members of the STE20 kinases, such as STK24, STK25 and STK26.

It is found in the cell membrane. Acts as a tumor suppressor. Acts as a tumor suppressor for colorectal cancer cell proliferation by targeting KEAP1/USP17/ELK1/CDK6 axis. This Mus musculus (Mouse) protein is PDCD10 and GCKIII kinases-associated protein 1.